The sequence spans 217 residues: tRNA (guanine-N(7)-)-methyltransferase (217 aa).

S-adenosyl-L-methionine contacts are provided by E44, E69, D96, and D118. D118 is an active-site residue. Substrate contacts are provided by residues K122, D154, and 191 to 194 (TEYE).

It belongs to the class I-like SAM-binding methyltransferase superfamily. TrmB family.

The catalysed reaction is guanosine(46) in tRNA + S-adenosyl-L-methionine = N(7)-methylguanosine(46) in tRNA + S-adenosyl-L-homocysteine. The protein operates within tRNA modification; N(7)-methylguanine-tRNA biosynthesis. Functionally, catalyzes the formation of N(7)-methylguanine at position 46 (m7G46) in tRNA. This Bacillus anthracis (strain CDC 684 / NRRL 3495) protein is tRNA (guanine-N(7)-)-methyltransferase.